The primary structure comprises 505 residues: Aspartyl/glutamyl-tRNA(Asn/Gln) amidotransferase subunit B (505 aa).

Residues asparagine 220–glutamate 241 form a disordered region.

Belongs to the GatB/GatE family. GatB subfamily. As to quaternary structure, heterotrimer of A, B and C subunits.

It carries out the reaction L-glutamyl-tRNA(Gln) + L-glutamine + ATP + H2O = L-glutaminyl-tRNA(Gln) + L-glutamate + ADP + phosphate + H(+). It catalyses the reaction L-aspartyl-tRNA(Asn) + L-glutamine + ATP + H2O = L-asparaginyl-tRNA(Asn) + L-glutamate + ADP + phosphate + 2 H(+). Allows the formation of correctly charged Asn-tRNA(Asn) or Gln-tRNA(Gln) through the transamidation of misacylated Asp-tRNA(Asn) or Glu-tRNA(Gln) in organisms which lack either or both of asparaginyl-tRNA or glutaminyl-tRNA synthetases. The reaction takes place in the presence of glutamine and ATP through an activated phospho-Asp-tRNA(Asn) or phospho-Glu-tRNA(Gln). The protein is Aspartyl/glutamyl-tRNA(Asn/Gln) amidotransferase subunit B of Frankia casuarinae (strain DSM 45818 / CECT 9043 / HFP020203 / CcI3).